Consider the following 87-residue polypeptide: Citrate lyase acyl carrier protein (87 aa).

The residue at position 14 (S14) is an O-(phosphoribosyl dephospho-coenzyme A)serine.

This sequence belongs to the CitD family. As to quaternary structure, oligomer with a subunit composition of (alpha,beta,gamma)6.

It localises to the cytoplasm. In terms of biological role, covalent carrier of the coenzyme of citrate lyase. This is Citrate lyase acyl carrier protein from Treponema denticola (strain ATCC 35405 / DSM 14222 / CIP 103919 / JCM 8153 / KCTC 15104).